The primary structure comprises 257 residues: MKDSFKLGNKEFNSRFILGSGKYSNELINSAINYAEAEIVTVAMRRAVSGVQENILDYIPKNITLLPNTSGARNAEEAVKIARLARECIQGDFIKIEVIKDSKYLLPDNYETIKATEILAKEGFIVMPYMYPDLNVARALRDAGASCIMPLAAPIGSNRGLITKEFIQILIDEIDLPIIVDAGIGKPSQACEAIEMGVTAIMANTAIATANDIPRMARAFKYAIQAGREAYLAKLGRVLEKGASASSPLTGFLNGVE.

Lys-95 functions as the Schiff-base intermediate with DXP in the catalytic mechanism. Residues Gly-156, 182 to 183 (AG), and 204 to 205 (NT) each bind 1-deoxy-D-xylulose 5-phosphate.

It belongs to the ThiG family. As to quaternary structure, homotetramer. Forms heterodimers with either ThiH or ThiS.

The protein resides in the cytoplasm. The catalysed reaction is [ThiS sulfur-carrier protein]-C-terminal-Gly-aminoethanethioate + 2-iminoacetate + 1-deoxy-D-xylulose 5-phosphate = [ThiS sulfur-carrier protein]-C-terminal Gly-Gly + 2-[(2R,5Z)-2-carboxy-4-methylthiazol-5(2H)-ylidene]ethyl phosphate + 2 H2O + H(+). It functions in the pathway cofactor biosynthesis; thiamine diphosphate biosynthesis. Catalyzes the rearrangement of 1-deoxy-D-xylulose 5-phosphate (DXP) to produce the thiazole phosphate moiety of thiamine. Sulfur is provided by the thiocarboxylate moiety of the carrier protein ThiS. In vitro, sulfur can be provided by H(2)S. The chain is Thiazole synthase from Fusobacterium nucleatum subsp. nucleatum (strain ATCC 25586 / DSM 15643 / BCRC 10681 / CIP 101130 / JCM 8532 / KCTC 2640 / LMG 13131 / VPI 4355).